Here is a 119-residue protein sequence, read N- to C-terminus: Large ribosomal subunit protein uL14 (119 aa).

It belongs to the universal ribosomal protein uL14 family. In terms of assembly, part of the 50S ribosomal subunit. Forms a cluster with proteins L3 and L19. In the 70S ribosome, L14 and L19 interact and together make contacts with the 16S rRNA in bridges B5 and B8.

Its function is as follows. Binds to 23S rRNA. Forms part of two intersubunit bridges in the 70S ribosome. The sequence is that of Large ribosomal subunit protein uL14 from Wolbachia pipientis subsp. Culex pipiens (strain wPip).